The following is a 224-amino-acid chain: Claudin-19 (224 aa).

Over M1–Q7 the chain is Cytoplasmic. A helical membrane pass occupies residues L8–P28. At Q29 to R81 the chain is on the extracellular side. Residues C54 and C64 are joined by a disulfide bond. Residues A82–M102 traverse the membrane as a helical segment. At K103 to R117 the chain is on the cytoplasmic side. The helical transmembrane segment at V118–S138 threads the bilayer. The Extracellular segment spans residues W139–E160. The helical transmembrane segment at F161 to F181 threads the bilayer. The Cytoplasmic portion of the chain corresponds to L182–V224.

It belongs to the claudin family. Can form homo- and heteropolymeric tight junction strands. Interacts with other claudins including CLDN3, CLDN10, CLDN16 and CLDN18 with highest affinity for CLDN16. Interacts (via PDZ-binding motif TRV) with TJP1 (via PDZ domain).

The protein resides in the cell junction. The protein localises to the tight junction. Its subcellular location is the cell membrane. It catalyses the reaction Mg(2+)(in) = Mg(2+)(out). It carries out the reaction Ca(2+)(in) = Ca(2+)(out). The enzyme catalyses Na(+)(in) = Na(+)(out). The catalysed reaction is K(+)(in) = K(+)(out). It catalyses the reaction Rb(+)(in) = Rb(+)(out). It carries out the reaction Cs(+)(in) = Cs(+)(out). The enzyme catalyses Li(+)(in) = Li(+)(out). Its function is as follows. Forms paracellular channels: coassembles with CLDN16 into tight junction strands with cation-selective channels through the strands, conveying epithelial permeability in a process known as paracellular tight junction permeability. Involved in the maintenance of ion gradients along the nephron. In the thick ascending limb (TAL) of Henle's loop, facilitates sodium paracellular permeability from the interstitial compartment to the lumen, contributing to the lumen-positive transepithelial potential that drives paracellular magnesium and calcium reabsorption. Forms paracellular barriers on its own. In the peripheral nervous system, represents a major constituent of the tight junctions in Schwann cells and contributes to electrical sealing. During retinal neurogenesis, may regulate the barrier properties of tight junctions in retinal pigment epithelium, required for proper retinal tissue differentiation and vision. The protein is Claudin-19 of Rattus norvegicus (Rat).